Reading from the N-terminus, the 179-residue chain is Large ribosomal subunit protein uL5 (179 aa).

The protein belongs to the universal ribosomal protein uL5 family. As to quaternary structure, part of the 50S ribosomal subunit; part of the 5S rRNA/L5/L18/L25 subcomplex. Contacts the 5S rRNA and the P site tRNA. Forms a bridge to the 30S subunit in the 70S ribosome.

Functionally, this is one of the proteins that bind and probably mediate the attachment of the 5S RNA into the large ribosomal subunit, where it forms part of the central protuberance. In the 70S ribosome it contacts protein S13 of the 30S subunit (bridge B1b), connecting the 2 subunits; this bridge is implicated in subunit movement. Contacts the P site tRNA; the 5S rRNA and some of its associated proteins might help stabilize positioning of ribosome-bound tRNAs. The protein is Large ribosomal subunit protein uL5 of Aeromonas salmonicida (strain A449).